The primary structure comprises 146 residues: Ferric uptake regulation protein 2 (146 aa).

Residues Cys96 and Cys99 each coordinate Zn(2+).

The protein belongs to the Fur family.

The protein resides in the cytoplasm. Functionally, acts as a global negative controlling element, employing Fe(2+) as a cofactor to bind the operator of the repressed genes. The sequence is that of Ferric uptake regulation protein 2 (fur2) from Mycolicibacterium fortuitum (Mycobacterium fortuitum).